The following is a 576-amino-acid chain: V-type ATP synthase alpha chain (576 aa).

Residue 238–245 (GPFGAGKT) coordinates ATP.

This sequence belongs to the ATPase alpha/beta chains family.

It carries out the reaction ATP + H2O + 4 H(+)(in) = ADP + phosphate + 5 H(+)(out). Its function is as follows. Produces ATP from ADP in the presence of a proton gradient across the membrane. The V-type alpha chain is a catalytic subunit. In Borrelia duttonii (strain Ly), this protein is V-type ATP synthase alpha chain.